Consider the following 128-residue polypeptide: Modulator protein MzrA (128 aa).

Residues 1 to 13 lie on the Cytoplasmic side of the membrane; that stretch reads MLALLRPYLSTRV. A helical membrane pass occupies residues 14–34; that stretch reads LCVLVVCFSALMLVAFIPTLF. The Periplasmic portion of the chain corresponds to 35–128; the sequence is RNDTALQIRA…RLSLRKQSVG (94 aa).

The protein belongs to the MzrA family. In terms of assembly, interacts with EnvZ.

The protein localises to the cell inner membrane. Functionally, modulates the activity of the EnvZ/OmpR two-component regulatory system, probably by directly modulating EnvZ enzymatic activity and increasing stability of phosphorylated OmpR. The chain is Modulator protein MzrA from Erwinia billingiae (strain Eb661).